A 403-amino-acid polypeptide reads, in one-letter code: Glycerophosphocholine acyltransferase 1 (403 aa).

Over 1–112 the chain is Cytoplasmic; sequence MDHLEFDENT…SGKVVRFRDK (112 aa). A helical membrane pass occupies residues 113-133; the sequence is LSFALGVSTCILTALLVGMAP. Residues 134-137 lie on the Lumenal side of the membrane; the sequence is ESMH. A helical membrane pass occupies residues 138-155; sequence LWYTIQLFVYLPLRYYTY. Residues 156–161 lie on the Cytoplasmic side of the membrane; the sequence is QRKGYE. Residues 162–182 form a helical membrane-spanning segment; that stretch reads YFIADFCYWGNILLLVYIWIF. Residues 183–186 lie on the Lumenal side of the membrane; sequence PESR. A helical transmembrane segment spans residues 187 to 207; it reads RLFILSYSISYGTLAWSVVAW. At 208 to 218 the chain is on the cytoplasmic side; the sequence is RNSLLFHSIDK. The chain crosses the membrane as a helical span at residues 219–239; it reads ITSLFIHFFPPLVLHTIVHLT. A glycan (N-linked (GlcNAc...) asparagine) is linked at Asn-240. Topologically, residues 240–262 are lumenal; it reads NKSYLKDRFPAVLKVKKIDLLSS. The chain crosses the membrane as a helical span at residues 263–283; it reads VEIASFFYALWQIWYYFFIQV. At 284–322 the chain is on the cytoplasmic side; it reads GKQKQIQEGRPTSFTWLSKAYSKTKLGRAVAKLPQNLQP. A helical membrane pass occupies residues 323 to 343; that stretch reads FVFMIIQYLYSITTMLPCSLW. Over 344 to 352 the chain is Lumenal; the sequence is YNNKLYSTA. The helical transmembrane segment at 353–373 threads the bilayer; that stretch reads FLALIFGWSVWNGASYYIDVF. Residues 374–403 lie on the Cytoplasmic side of the membrane; that stretch reads GRRFQKELEALRQQLAETPTNSGSSSALSR.

Belongs to the GPC1 family.

It is found in the endoplasmic reticulum membrane. Its subcellular location is the golgi apparatus membrane. It catalyses the reaction sn-glycerol 3-phosphocholine + an acyl-CoA = a 1-acyl-sn-glycero-3-phosphocholine + CoA. The enzyme catalyses sn-glycero-3-phosphoethanolamine + an acyl-CoA = a monoacyl-sn-glycero-3-phosphoethanolamine + CoA. The catalysed reaction is sn-glycero-3-phosphoethanolamine + (9Z)-octadecenoyl-CoA = (9Z-octadecenoyl)-sn-glycero-3-phosphoethanolamine + CoA. Glycerophosphocholine acyltransferase (GPCAT) that utilizes acyl-CoA to acylate glycero-3-phosphocholine (GPC), forming lysophosphatidylcholine (LPC). Shows broad acyl specificities with a preference for 16:0-CoA, polyunsaturated acyl-CoA, and the hydroxylated ricinoleoyl-CoA. Also catalyzes the acylation of glycero-3-phosphoethanolamine (GPE) with acyl-CoA. In addition to acyl-CoA, GPCAT efficiently utilizes LPC and lysophosphatidylethanolamine (LPE) as acyl donors in the acylation of GPC. Contributes to the maintenance of phosphatidylcholine (PC) homeostasis and might also have specific functions in acyl editing of PC, such as transferring acyl groups modified at the sn-2 position of PC to the sn-1. This is Glycerophosphocholine acyltransferase 1 from Schizosaccharomyces pombe (strain 972 / ATCC 24843) (Fission yeast).